We begin with the raw amino-acid sequence, 100 residues long: uncharacterized protein (100 aa).

This sequence belongs to the csb family.

This is an uncharacterized protein from Dictyostelium discoideum (Social amoeba).